The chain runs to 440 residues: GTPase Der (440 aa).

2 consecutive EngA-type G domains span residues 5–167 and 178–353; these read ATVA…PEQE and IMLS…KEHS. Residues 11–18, 58–62, 120–123, 184–191, 231–235, and 296–299 contribute to the GTP site; these read GRPNVGKS, DTGGI, NKSE, DTAGL, and NKWD. One can recognise a KH-like domain in the interval 354–438; it reads KRITTADVNR…PIRILERVKQ (85 aa).

Belongs to the TRAFAC class TrmE-Era-EngA-EngB-Septin-like GTPase superfamily. EngA (Der) GTPase family. In terms of assembly, associates with the 50S ribosomal subunit.

Its function is as follows. GTPase that plays an essential role in the late steps of ribosome biogenesis. The sequence is that of GTPase Der from Natranaerobius thermophilus (strain ATCC BAA-1301 / DSM 18059 / JW/NM-WN-LF).